A 43-amino-acid polypeptide reads, in one-letter code: Protein PsbN (43 aa).

A helical membrane pass occupies residues 5–27 (NLVAIFVSCLLVSLTGYALYTSF).

The protein belongs to the PsbN family.

It is found in the plastid. Its subcellular location is the chloroplast thylakoid membrane. Functionally, may play a role in photosystem I and II biogenesis. The protein is Protein PsbN of Ephedra sinica (Chinese ephedra).